We begin with the raw amino-acid sequence, 146 residues long: Hemoglobin subunit beta (146 aa).

In terms of domain architecture, Globin spans 2–146; that stretch reads HWSAEEKQLI…VAHALARKYH (145 aa). Residues His-63 and His-92 each contribute to the heme b site.

Belongs to the globin family. As to quaternary structure, heterotetramer of two alpha chains and two beta chains. In terms of tissue distribution, red blood cells.

Involved in oxygen transport from the lung to the various peripheral tissues. This Aptenodytes forsteri (Emperor penguin) protein is Hemoglobin subunit beta (HBB).